The following is a 230-amino-acid chain: Prepilin leader peptidase/N-methyltransferase (230 aa).

Helical transmembrane passes span 1–21 (MIYF…WFYL), 60–80 (GHIL…QIAF), 84–104 (IFTV…YLDW), 114–134 (CLWL…LLTL), 140–160 (SAAS…FYYG), 181–201 (LETL…FSLI), and 208–228 (FLPF…VKYY).

The protein belongs to the peptidase A24 family.

The protein resides in the cell inner membrane. The catalysed reaction is Typically cleaves a -Gly-|-Phe- bond to release an N-terminal, basic peptide of 5-8 residues from type IV prepilin, and then N-methylates the new N-terminal amino group, the methyl donor being S-adenosyl-L-methionine.. In terms of biological role, plays a role in type II pseudopili formation by proteolytically removing the leader sequence from substrate proteins and subsequently monomethylating the alpha-amino group of the newly exposed N-terminal phenylalanine. Substrates include proteins required for biogenesis of the type II general secretory apparatus. The chain is Prepilin leader peptidase/N-methyltransferase (hofD) from Haemophilus influenzae (strain ATCC 51907 / DSM 11121 / KW20 / Rd).